We begin with the raw amino-acid sequence, 645 residues long: Minor extracellular protease Epr (645 aa).

Positions 1 to 27 are cleaved as a signal peptide; it reads MKNMSCKLVVSVTLFFSFLTIGPLAHA. A propeptide spanning residues 28 to 103 is cleaved from the precursor; it reads QNSSEKEVIV…AADSTDFKVL (76 aa). The Peptidase S8 domain occupies 115 to 382; that stretch reads QWNLEPIQVK…YGLIQYKAQA (268 aa). Active-site charge relay system residues include Asp142, His172, and Ser326. Disordered stretches follow at residues 490-577 and 591-645; these read KQAK…KTAL and AEAK…KPKK. Residues 491–508 show a composition bias toward basic and acidic residues; that stretch reads QAKDKVAKAEKSKKKTDV. A compositionally biased stretch (polar residues) spans 522 to 547; it reads SEKTSLQKRLNKVKSTNLKTAQQSVS. Over residues 592-610 the composition is skewed to basic and acidic residues; the sequence is EAKKVETAKAKVKKAEKDK.

It belongs to the peptidase S8 family. In terms of processing, may undergo two steps of processing in its passage through the cell membrane: removal of the N-terminal signal sequence and cleavage of the C-terminal domain. Several active forms of Epr with molecular masses between 40 and 34 kDa were found in the medium of B.subtilis cultures. The size variation of the active forms expressed by the complete epr gene appears to be the result of partial removal of the C-terminus either by processing or degradation.

It is found in the secreted. Its subcellular location is the cell wall. With respect to regulation, requires Ca(2+) for stability. Activity is inhibited by phenylmethylsulfonyl fluoride (PMSF) and EDTA. Serine protease. Involved in the production of the competence and sporulation stimulating factor CSF. In addition, is essential for swarming motility. Plays a key role in DegU-mediated swarming motility. The protease activity is dispensable for swarming. Not essential for growth or sporulation. The sequence is that of Minor extracellular protease Epr from Bacillus subtilis (strain 168).